Consider the following 297-residue polypeptide: N-acetylneuraminate lyase (297 aa).

Residues Ser47 and Thr48 each contribute to the aceneuramate site. Tyr137 serves as the catalytic Proton donor. The active-site Schiff-base intermediate with substrate is the Lys165. Residues Thr167, Gly189, Asp191, Glu192, and Ser208 each coordinate aceneuramate.

It belongs to the DapA family. NanA subfamily. In terms of assembly, homotetramer.

The protein resides in the cytoplasm. The catalysed reaction is aceneuramate = aldehydo-N-acetyl-D-mannosamine + pyruvate. It participates in amino-sugar metabolism; N-acetylneuraminate degradation; D-fructose 6-phosphate from N-acetylneuraminate: step 1/5. Functionally, catalyzes the reversible aldol cleavage of N-acetylneuraminic acid (sialic acid; Neu5Ac) to form pyruvate and N-acetylmannosamine (ManNAc) via a Schiff base intermediate. The protein is N-acetylneuraminate lyase of Salmonella choleraesuis (strain SC-B67).